Reading from the N-terminus, the 264-residue chain is Phosphonoacetaldehyde hydrolase (264 aa).

Residue D10 is the Nucleophile of the active site. Mg(2+) is bound by residues D10 and A12. The active-site Schiff-base intermediate with substrate is K52. A Mg(2+)-binding site is contributed by D185.

The protein belongs to the HAD-like hydrolase superfamily. PhnX family. Homodimer. Mg(2+) serves as cofactor.

The enzyme catalyses phosphonoacetaldehyde + H2O = acetaldehyde + phosphate + H(+). In terms of biological role, involved in phosphonate degradation. This Parabacteroides distasonis (strain ATCC 8503 / DSM 20701 / CIP 104284 / JCM 5825 / NCTC 11152) protein is Phosphonoacetaldehyde hydrolase.